Reading from the N-terminus, the 154-residue chain is 6,7-dimethyl-8-ribityllumazine synthase (154 aa).

5-amino-6-(D-ribitylamino)uracil-binding positions include Phe-23, 57–59 (AFE), and 81–83 (AVI). 86 to 87 (AT) contacts (2S)-2-hydroxy-3-oxobutyl phosphate. The active-site Proton donor is the His-89. Residue Phe-114 participates in 5-amino-6-(D-ribitylamino)uracil binding. Position 128 (Arg-128) interacts with (2S)-2-hydroxy-3-oxobutyl phosphate.

Belongs to the DMRL synthase family.

The catalysed reaction is (2S)-2-hydroxy-3-oxobutyl phosphate + 5-amino-6-(D-ribitylamino)uracil = 6,7-dimethyl-8-(1-D-ribityl)lumazine + phosphate + 2 H2O + H(+). It participates in cofactor biosynthesis; riboflavin biosynthesis; riboflavin from 2-hydroxy-3-oxobutyl phosphate and 5-amino-6-(D-ribitylamino)uracil: step 1/2. In terms of biological role, catalyzes the formation of 6,7-dimethyl-8-ribityllumazine by condensation of 5-amino-6-(D-ribitylamino)uracil with 3,4-dihydroxy-2-butanone 4-phosphate. This is the penultimate step in the biosynthesis of riboflavin. In Syntrophus aciditrophicus (strain SB), this protein is 6,7-dimethyl-8-ribityllumazine synthase.